We begin with the raw amino-acid sequence, 365 residues long: Zinc finger protein lsy-2 (365 aa).

Residues 1 to 36 form a disordered region; sequence MLTRRNAKQSQRNSADQSLSEFNSSSMTHGSNQSVY. Residues 8-36 show a composition bias toward polar residues; the sequence is KQSQRNSADQSLSEFNSSSMTHGSNQSVY. C2H2-type zinc fingers lie at residues 78–100, 106–128, 134–156, 264–287, and 296–318; these read HQCNVCNKIFVSYKGLQQHAVIH, FRCDICSKSFRFKSNLFEHRSVH, HACPYCGKTCRLKGNLKKHLRTH, HDCPVCKSQFMTRMDCVSHHTLEH, and FFCEKCYRPFADEASYNQHMSYH.

Its subcellular location is the nucleus speckle. Functionally, involved in transcriptional regulation. Required to specify left-right asymmetry of the ASE gustatory neurons, probably acting upstream of microRNA lsy-6. Involved in maintaining the distinction between somatic and germ cells, perhaps acting by repressing germ cell-specific genes in somatic cells. This is Zinc finger protein lsy-2 from Caenorhabditis elegans.